A 67-amino-acid polypeptide reads, in one-letter code: Systemic RNA interference defective protein 5 (67 aa).

Over 1-18 (MPSKNCAKNLHACQWERD) the chain is Extracellular. The chain crosses the membrane as a helical span at residues 19-39 (IALVFLGLMVLFNIGQVVYMN). Residues 40 to 67 (RARLYRLIRRGAEQIPADDEEPIIGIRD) are Cytoplasmic-facing.

Ubiquitously present in most tissues tested. Expressed in the somatic cells of intestine, muscle, neurons, somatic gonad and embryos but not in the germline (at protein level).

Its subcellular location is the late endosome membrane. Its function is as follows. Plays a role in RNA-mediated gene silencing by mediating transport of both ingested and endogenous dsRNA between cells. Not required for the uptake of dsRNA from the intestinal lumen. In Caenorhabditis elegans, this protein is Systemic RNA interference defective protein 5.